Here is a 333-residue protein sequence, read N- to C-terminus: NADH dehydrogenase (ubiquinone) complex I, assembly factor 6 (333 aa).

The transit peptide at 1–44 (MAASAHGSVWGPLRLGIPGLCCRRPPLGLYARMRRLPGPEVSGR) directs the protein to the mitochondrion.

This sequence belongs to the NDUFAF6 family. As to expression, widely expressed. A lower expression is observed in lung and kidney compared to heart, muscle and liver. In the kidney, expression is high in the basal zone of the proximal tubular cells.

It is found in the mitochondrion inner membrane. The protein localises to the cytoplasm. It localises to the nucleus. Functionally, involved in the assembly of mitochondrial NADH:ubiquinone oxidoreductase complex (complex I) at early stages. May play a role in the biogenesis of complex I subunit MT-ND1. This Homo sapiens (Human) protein is NADH dehydrogenase (ubiquinone) complex I, assembly factor 6 (NDUFAF6).